Here is a 749-residue protein sequence, read N- to C-terminus: MAELGAGGDGHRGGDGAVRSETAPDSYKVQDKKNASSRPASAISGQNNNHSGNKPDPPPVLRVDDRQRLARERREEREKQLAAREIVWLEREERARQHYEKHLEERKKRLEEQRQKEERRRAAVEEKRRQRLEEDKERHEAVVRRTMERSQKPKQKHNRWSWGGSLHGSPSIHSADPDRRSVSTMNLSKYVDPVISKRLSSSSATLLNSPDRARRLQLSPWESSVVNRLLTPTHSFLARSKSTAALSGEAASCSPIIMPYKAAHSRNSMDRPKLFVTPPEGSSRRRIIHGTASYKKERERENVLFLTSGTRRAVSPSNPKARQPARSRLWLPSKSLPHLPGTPRPTSSLPPGSVKAAPAQVRPPSPGNIRPVKREVKVEPEKKDPEKEPQKVANEPSLKGRAPLVKVEEATVEERTPAEPEVGPAAPAMAPAPASAPAPASAPAPAPVPTPAMVSAPSSTVNASASVKTSAGTTDPEEATRLLAEKRRLAREQREKEERERREQEELERQKREELAQRVAEERTTRREEESRRLEAEQAREKEEQLQRQAEERALREREEAERAQRQKEEEARVREEAERVRQEREKHFQREEQERLERKKRLEEIMKRTRRTEATDKKTSDQRNGDIAKGALTGGTEVSALPCTTNAPGNGKPVGSPHVVTSHQSKVTVESTPDLEKQPNENGVSVQNENFEEIINLPIGSKPSRLDVTNSESPEIPLNPILAFDDEGTLGPLPQVDGVQTQQTAEVI.

Disordered stretches follow at residues 1–91 (MAEL…WLER) and 104–180 (EERK…PDRR). The residue at position 2 (Ala2) is an N-acetylalanine. A compositionally biased stretch (polar residues) spans 36–52 (SSRPASAISGQNNNHSG). 2 stretches are compositionally biased toward basic and acidic residues: residues 62–91 (RVDD…WLER) and 104–151 (EERK…ERSQ). Positions 89–152 (LEREERARQH…VRRTMERSQK (64 aa)) form a coiled coil. Residues Ser161, Ser165, Ser183, Ser200, Ser202, Ser209, and Ser219 each carry the phosphoserine modification. Position 231 is a phosphothreonine (Thr231). Residues Ser235 and Ser254 each carry the phosphoserine modification. Residue Lys273 forms a Glycyl lysine isopeptide (Lys-Gly) (interchain with G-Cter in SUMO2) linkage. Thr277 bears the Phosphothreonine mark. Position 282 is a phosphoserine (Ser282). Lys295 is covalently cross-linked (Glycyl lysine isopeptide (Lys-Gly) (interchain with G-Cter in SUMO2)). Over residues 307 to 320 (TSGTRRAVSPSNPK) the composition is skewed to polar residues. Disordered regions lie at residues 307–688 (TSGT…VSVQ) and 702–723 (SKPS…NPIL). 2 positions are modified to phosphoserine: Ser335 and Ser365. Basic and acidic residues-rich tracts occupy residues 372–390 (VKRE…KEPQ) and 406–418 (KVEE…RTPA). Glycyl lysine isopeptide (Lys-Gly) (interchain with G-Cter in SUMO2) cross-links involve residues Lys373, Lys377, and Lys406. The segment covering 424 to 433 (PAAPAMAPAP) has biased composition (low complexity). The span at 434–450 (ASAPAPASAPAPAPVPT) shows a compositional bias: pro residues. Low complexity predominate over residues 451-460 (PAMVSAPSST). A compositionally biased stretch (polar residues) spans 461 to 473 (VNASASVKTSAGT). Residues 477–612 (EEATRLLAEK…LEEIMKRTRR (136 aa)) are a coiled coil. Residues 478 to 627 (EATRLLAEKR…KKTSDQRNGD (150 aa)) are compositionally biased toward basic and acidic residues. Positions 660–672 (VVTSHQSKVTVES) are enriched in polar residues. Thr673 is modified (phosphothreonine).

This sequence belongs to the MAP7 family. In terms of assembly, interacts with TRPV4. In terms of processing, the association with microtubules is regulated by phosphorylation during the cell cycle. During interphase only phosphorylated on serine. Phosphorylated on threonine in mitosis. As to expression, expressed in the skin and cells of epithelial origin. Predominantly expressed in the suprabasal layers of the normal epidermis and relatively abundant in squamous cell carcinomas but barely detectable in basal cell carcinomas.

The protein localises to the cytoplasm. The protein resides in the perinuclear region. It is found in the basolateral cell membrane. It localises to the cytoskeleton. Microtubule-stabilizing protein that may play an important role during reorganization of microtubules during polarization and differentiation of epithelial cells. Associates with microtubules in a dynamic manner. May play a role in the formation of intercellular contacts. Colocalization with TRPV4 results in the redistribution of TRPV4 toward the membrane and may link cytoskeletal microfilaments. The chain is Ensconsin (MAP7) from Homo sapiens (Human).